The primary structure comprises 32 residues: Growth hormone-related protein 4 (32 aa).

C4 and C11 are joined by a disulfide.

It belongs to the somatotropin/prolactin family. In terms of processing, glycosylated. As to expression, placental basal zone cells.

The protein localises to the secreted. This Rattus norvegicus (Rat) protein is Growth hormone-related protein 4.